The following is a 154-amino-acid chain: Nucleoside diphosphate kinase (154 aa).

K12, F60, R88, T94, R105, and N115 together coordinate ATP. H118 functions as the Pros-phosphohistidine intermediate in the catalytic mechanism.

This sequence belongs to the NDK family. Mg(2+) serves as cofactor.

It localises to the cytoplasm. It catalyses the reaction a 2'-deoxyribonucleoside 5'-diphosphate + ATP = a 2'-deoxyribonucleoside 5'-triphosphate + ADP. It carries out the reaction a ribonucleoside 5'-diphosphate + ATP = a ribonucleoside 5'-triphosphate + ADP. Its function is as follows. Major role in the synthesis of nucleoside triphosphates other than ATP. The ATP gamma phosphate is transferred to the NDP beta phosphate via a ping-pong mechanism, using a phosphorylated active-site intermediate. The chain is Nucleoside diphosphate kinase from Haloarcula marismortui (strain ATCC 43049 / DSM 3752 / JCM 8966 / VKM B-1809) (Halobacterium marismortui).